The primary structure comprises 235 residues: Octanoyltransferase LIP2, mitochondrial (235 aa).

The N-terminal 32 residues, 1-32 (MRSPRTLEVWKLGTVNYLKSLKLQEKLVSERK), are a transit peptide targeting the mitochondrion. The BPL/LPL catalytic domain occupies 34 to 218 (HQIPDTLLSL…CLAKAFSYDD (185 aa)). Substrate contacts are provided by residues 79–86 (RGGDITFH), 147–149 (AIG), and 160–162 (GLA). Cys-178 acts as the Acyl-thioester intermediate in catalysis.

Belongs to the LipB family. Expressed in leaves. Expressed in roots, rosette leaves, cauline leaves, stems and siliques.

The protein localises to the mitochondrion. It carries out the reaction octanoyl-[ACP] + L-lysyl-[protein] = N(6)-octanoyl-L-lysyl-[protein] + holo-[ACP] + H(+). The protein operates within protein modification; protein lipoylation via endogenous pathway; protein N(6)-(lipoyl)lysine from octanoyl-[acyl-carrier-protein]: step 1/2. Functionally, catalyzes the transfer of endogenously produced octanoic acid from octanoyl-acyl-carrier-protein onto the lipoyl domains of lipoate-dependent enzymes. Lipoyl-ACP can also act as a substrate although octanoyl-ACP is likely to be the physiological substrate. Together with LIP1 is essential for mitochondrial protein lipoylation during seed development. Required for the lipoylation of mitochondrial 2-oxoglutarate dehydrogenase component E2 proteins in leaves and roots. The sequence is that of Octanoyltransferase LIP2, mitochondrial from Arabidopsis thaliana (Mouse-ear cress).